The sequence spans 337 residues: MKIALDVMGGDHAPEAHVEAAIKAVKAFPDLTITLVGNEEEIRPLLPANDPRLPILHTTEKIEDTDQPTTAVRRKKDSSMVLAVREVKEGRADAVISSGNTGALMTAGLLYVGRIQGIDRPALAPMLPTLDEKGFLLLDVGANMDGKPEHLLQYAIMGNTYMEMVRGIKQPRVGLLNVGTEAGKGNELTKAAFPLLEAGPFHFIGNVEARELLNGACDVVVCDGFSGNLVLKSVEGTAGSMFSLLKRELTKTFISKLAVALLKGRFKEIKQVMSYSEYGGASLFGLKAPVIKAHGSSVASSVYHTIAQAYEMVNQQVTTIIKTEVAKATKGSEEKGE.

This sequence belongs to the PlsX family. As to quaternary structure, homodimer. Probably interacts with PlsY.

It localises to the cytoplasm. The catalysed reaction is a fatty acyl-[ACP] + phosphate = an acyl phosphate + holo-[ACP]. It participates in lipid metabolism; phospholipid metabolism. In terms of biological role, catalyzes the reversible formation of acyl-phosphate (acyl-PO(4)) from acyl-[acyl-carrier-protein] (acyl-ACP). This enzyme utilizes acyl-ACP as fatty acyl donor, but not acyl-CoA. This Halalkalibacterium halodurans (strain ATCC BAA-125 / DSM 18197 / FERM 7344 / JCM 9153 / C-125) (Bacillus halodurans) protein is Phosphate acyltransferase.